The sequence spans 287 residues: MNWIERIINKNIVLTTKKMHVPEGIWTKCSGCVQLLYTKELERNLQVCPKCDFHMKISARSRLLAFLDQGSVCELGQELLPKDIFKFKDRKKYKDRLIDAQKKTQEKEALIVMQGTIYSMQVVVAAFEFDFIGGSMSSAVGSRFVQAVNQSLKLKCPFVCFSSSGGARMQEAFVSLMQMAKTSAALAVLYDRCLPYISVLTNPTMGGVSASLGMLGDINIAEPKALIGFAGPRVIEQTVREKLPLGFQRSEFLLEKGVIDLIVRRPDMRLKIANLLSKLTQQSFSEK.

The 263-residue stretch at 25 to 287 folds into the CoA carboxyltransferase N-terminal domain; the sequence is IWTKCSGCVQ…KLTQQSFSEK (263 aa). Residues cysteine 29, cysteine 32, cysteine 48, and cysteine 51 each coordinate Zn(2+). The C4-type zinc finger occupies 29–51; the sequence is CSGCVQLLYTKELERNLQVCPKC.

It belongs to the AccD/PCCB family. In terms of assembly, acetyl-CoA carboxylase is a heterohexamer composed of biotin carboxyl carrier protein (AccB), biotin carboxylase (AccC) and two subunits each of ACCase subunit alpha (AccA) and ACCase subunit beta (AccD). It depends on Zn(2+) as a cofactor.

It localises to the cytoplasm. It carries out the reaction N(6)-carboxybiotinyl-L-lysyl-[protein] + acetyl-CoA = N(6)-biotinyl-L-lysyl-[protein] + malonyl-CoA. The protein operates within lipid metabolism; malonyl-CoA biosynthesis; malonyl-CoA from acetyl-CoA: step 1/1. Functionally, component of the acetyl coenzyme A carboxylase (ACC) complex. Biotin carboxylase (BC) catalyzes the carboxylation of biotin on its carrier protein (BCCP) and then the CO(2) group is transferred by the transcarboxylase to acetyl-CoA to form malonyl-CoA. The polypeptide is Acetyl-coenzyme A carboxylase carboxyl transferase subunit beta (Blochmanniella floridana).